Consider the following 501-residue polypeptide: Symplectin (501 aa).

Residues 20–287 enclose the CN hydrolase domain; sequence PKTDMETREE…SKLLVAEILP (268 aa). Glutamate 60 serves as the catalytic Proton acceptor. The active-site Proton donor is lysine 163. The Nucleophile role is filled by cysteine 196. Cysteine 390 is subject to S-(coelenterazin-3a-yl)cysteine.

This sequence belongs to the carbon-nitrogen hydrolase superfamily. BTD/VNN family. Photogenic gland (at protein level).

Functionally, monovalent ion-dependent bioluminescence photoprotein. Displays an emission peak at 470 nm (blue light). Trace amounts of monovalent ion trigger the intramolecular oxidation of the chromophore, didehydrocoelenterazine, with the emission of light. The sequence is that of Symplectin from Sthenoteuthis oualaniensis (Purpleback flying squid).